We begin with the raw amino-acid sequence, 362 residues long: Glutaminase-asparaginase (362 aa).

The N-terminal stretch at 1 to 25 is a signal peptide; that stretch reads MKPLLHAFAPGVMALMLLLPQAAQA. Residues 35–362 form the Asparaginase/glutaminase domain; sequence SNVVILATGG…KELQRIFWEY (328 aa). Catalysis depends on Thr45, which acts as the Acyl-ester intermediate. Residues Ser92 and 125–126 each bind substrate; that span reads TD.

This sequence belongs to the asparaginase 1 family. In terms of assembly, homotetramer.

It localises to the periplasm. It catalyses the reaction L-glutamine + H2O = L-glutamate + NH4(+). The enzyme catalyses L-asparagine + H2O = L-aspartate + NH4(+). In Pseudomonas aeruginosa (strain ATCC 15692 / DSM 22644 / CIP 104116 / JCM 14847 / LMG 12228 / 1C / PRS 101 / PAO1), this protein is Glutaminase-asparaginase (ansB).